The sequence spans 102 residues: Nucleoid-associated protein WIGBR5260 (102 aa).

The protein belongs to the YbaB/EbfC family. Homodimer.

It is found in the cytoplasm. The protein localises to the nucleoid. In terms of biological role, binds to DNA and alters its conformation. May be involved in regulation of gene expression, nucleoid organization and DNA protection. This chain is Nucleoid-associated protein WIGBR5260, found in Wigglesworthia glossinidia brevipalpis.